The primary structure comprises 582 residues: ATP-dependent lipid A-core flippase (582 aa).

A run of 5 helical transmembrane segments spans residues Leu-16–Leu-36, Leu-64–Ile-84, Ile-153–Val-173, Pro-253–Pro-273, and Val-275–Met-295. The 283-residue stretch at Ile-28–Arg-310 folds into the ABC transmembrane type-1 domain. Residues Leu-342–Met-578 form the ABC transporter domain. Gly-376–Ser-383 serves as a coordination point for ATP.

Belongs to the ABC transporter superfamily. Lipid exporter (TC 3.A.1.106) family. As to quaternary structure, homodimer.

The protein localises to the cell inner membrane. It carries out the reaction ATP + H2O + lipid A-core oligosaccharideSide 1 = ADP + phosphate + lipid A-core oligosaccharideSide 2.. Functionally, involved in lipopolysaccharide (LPS) biosynthesis. Translocates lipid A-core from the inner to the outer leaflet of the inner membrane. Transmembrane domains (TMD) form a pore in the inner membrane and the ATP-binding domain (NBD) is responsible for energy generation. The polypeptide is ATP-dependent lipid A-core flippase (Salmonella paratyphi A (strain ATCC 9150 / SARB42)).